We begin with the raw amino-acid sequence, 238 residues long: Ribonuclease 3 (238 aa).

In terms of domain architecture, RNase III spans 4–134 (PRQALLDAFG…LLGAIYLHHG (131 aa)). Residue glutamate 44 participates in Mg(2+) binding. Residue aspartate 48 is part of the active site. 2 residues coordinate Mg(2+): aspartate 120 and glutamate 123. The active site involves glutamate 123. Residues 161 to 229 (DWKTSLQELT…ASAAWKALDV (69 aa)) enclose the DRBM domain.

This sequence belongs to the ribonuclease III family. Homodimer. The cofactor is Mg(2+).

The protein resides in the cytoplasm. It carries out the reaction Endonucleolytic cleavage to 5'-phosphomonoester.. Functionally, digests double-stranded RNA. Involved in the processing of primary rRNA transcript to yield the immediate precursors to the large and small rRNAs (23S and 16S). Processes some mRNAs, and tRNAs when they are encoded in the rRNA operon. Processes pre-crRNA and tracrRNA of type II CRISPR loci if present in the organism. This chain is Ribonuclease 3, found in Mycobacterium leprae (strain TN).